We begin with the raw amino-acid sequence, 298 residues long: Glutamyl-Q tRNA(Asp) synthetase (298 aa).

L-glutamate contacts are provided by residues 9-13 and glutamate 45; that span reads RFAPS. Residues 12–22 carry the 'HIGH' region motif; it reads PSPTGLLHAGS. Positions 101, 103, 121, and 125 each coordinate Zn(2+). 2 residues coordinate L-glutamate: tyrosine 179 and arginine 197. The 'KMSKS' region motif lies at 235–239; it reads KLSKQ. Lysine 238 provides a ligand contact to ATP.

It belongs to the class-I aminoacyl-tRNA synthetase family. GluQ subfamily. Zn(2+) serves as cofactor.

Functionally, catalyzes the tRNA-independent activation of glutamate in presence of ATP and the subsequent transfer of glutamate onto a tRNA(Asp). Glutamate is transferred on the 2-amino-5-(4,5-dihydroxy-2-cyclopenten-1-yl) moiety of the queuosine in the wobble position of the QUC anticodon. This Chromobacterium violaceum (strain ATCC 12472 / DSM 30191 / JCM 1249 / CCUG 213 / NBRC 12614 / NCIMB 9131 / NCTC 9757 / MK) protein is Glutamyl-Q tRNA(Asp) synthetase.